We begin with the raw amino-acid sequence, 319 residues long: Probable enoyl-CoA hydratase alpha subunit (319 aa).

The interval 199–298 is DUF35; it reads FEAAKQRRLV…EIGMPVVLDW (100 aa).

The protein belongs to the thioester dehydratase family. In terms of assembly, heterodimer composed of ChsH1 and ChsH2. Two heterodimers combine to form a heterotetramer. The complex interacts with Ltp2 via the DUF35 C-terminal region of ChsH2.

Functionally, probably involved in bile acid degradation. This is Probable enoyl-CoA hydratase alpha subunit from Thermomonospora curvata (strain ATCC 19995 / DSM 43183 / JCM 3096 / KCTC 9072 / NBRC 15933 / NCIMB 10081 / Henssen B9).